A 407-amino-acid chain; its full sequence is MIPLLFVVYVVAVKVFKKTTPNGKVTVYLGKRDFIDHLDHVDPIDGIVVVDNDYLRGRKVFGQLTTTYRYGREEDEVMGLKFTKEMVLAKEQIVPQTKEKMELTPIQERLMKKLGPNAFPFTFHFPASSPSSVTLQPGDDDQGKPLGVEYSVKTWVGDHAEEKGHKRSAVTLAIKKLQYAPPTRGRRLPSSLVSKGFTFSQGKINLEVTLDREIYYHGEKLAANVIINNNSRKTVKNIKVYVVQHCEVTMVNAQFSRHVASLETREGCPITPGASFTKVFYLVPCAASNKDRYGIALDGYLKDDDVNLASSTLVSEGKNTTDAIGIVISYSLRVKLNCGTLGGELQTDVPFKLLHPAPGTAEREKAQAIKKMKSIERTRYENSCYAADDDDNIVFEDFARLRLNEPE.

The protein belongs to the arrestin family.

In Locusta migratoria (Migratory locust), this protein is Arrestin homolog.